A 300-amino-acid polypeptide reads, in one-letter code: Phosphoribosylaminoimidazole-succinocarboxamide synthase (300 aa).

Belongs to the SAICAR synthetase family.

The enzyme catalyses 5-amino-1-(5-phospho-D-ribosyl)imidazole-4-carboxylate + L-aspartate + ATP = (2S)-2-[5-amino-1-(5-phospho-beta-D-ribosyl)imidazole-4-carboxamido]succinate + ADP + phosphate + 2 H(+). It functions in the pathway purine metabolism; IMP biosynthesis via de novo pathway; 5-amino-1-(5-phospho-D-ribosyl)imidazole-4-carboxamide from 5-amino-1-(5-phospho-D-ribosyl)imidazole-4-carboxylate: step 1/2. This Methylibium petroleiphilum (strain ATCC BAA-1232 / LMG 22953 / PM1) protein is Phosphoribosylaminoimidazole-succinocarboxamide synthase.